We begin with the raw amino-acid sequence, 283 residues long: NAD kinase (283 aa).

The Proton acceptor role is filled by D66. NAD(+)-binding positions include 66–67 (DG), R71, 137–138 (ND), H165, D167, and 178–183 (TGYSMS).

It belongs to the NAD kinase family. The cofactor is a divalent metal cation.

The protein resides in the cytoplasm. The enzyme catalyses NAD(+) + ATP = ADP + NADP(+) + H(+). Its function is as follows. Involved in the regulation of the intracellular balance of NAD and NADP, and is a key enzyme in the biosynthesis of NADP. Catalyzes specifically the phosphorylation on 2'-hydroxyl of the adenosine moiety of NAD to yield NADP. This is NAD kinase from Agathobacter rectalis (strain ATCC 33656 / DSM 3377 / JCM 17463 / KCTC 5835 / VPI 0990) (Eubacterium rectale).